Reading from the N-terminus, the 549-residue chain is Probable protein kinase UbiB (549 aa).

Residues 123-501 (DFNETPLASA…QQQAHKSNYL (379 aa)) form the Protein kinase domain. Residues 129 to 137 (LASASISQV) and K152 contribute to the ATP site. D287 functions as the Proton acceptor in the catalytic mechanism. Helical transmembrane passes span 498-518 (SNYL…LFNQ) and 520-540 (ATLW…IIGW).

This sequence belongs to the ABC1 family. UbiB subfamily.

The protein localises to the cell inner membrane. It functions in the pathway cofactor biosynthesis; ubiquinone biosynthesis [regulation]. Functionally, is probably a protein kinase regulator of UbiI activity which is involved in aerobic coenzyme Q (ubiquinone) biosynthesis. The polypeptide is Probable protein kinase UbiB (Shewanella sp. (strain MR-4)).